A 201-amino-acid polypeptide reads, in one-letter code: 3-isopropylmalate dehydratase small subunit (201 aa).

Belongs to the LeuD family. LeuD type 1 subfamily. Heterodimer of LeuC and LeuD.

The enzyme catalyses (2R,3S)-3-isopropylmalate = (2S)-2-isopropylmalate. Its pathway is amino-acid biosynthesis; L-leucine biosynthesis; L-leucine from 3-methyl-2-oxobutanoate: step 2/4. Catalyzes the isomerization between 2-isopropylmalate and 3-isopropylmalate, via the formation of 2-isopropylmaleate. In Shewanella sp. (strain MR-4), this protein is 3-isopropylmalate dehydratase small subunit.